The primary structure comprises 640 residues: 1-deoxy-D-xylulose-5-phosphate synthase (640 aa).

Residues His72 and 113 to 115 (GHA) contribute to the thiamine diphosphate site. Residue Asp144 coordinates Mg(2+). Thiamine diphosphate is bound by residues 145-146 (GA), Asn174, Tyr287, and Glu370. Position 174 (Asn174) interacts with Mg(2+).

Belongs to the transketolase family. DXPS subfamily. Homodimer. The cofactor is Mg(2+). Thiamine diphosphate serves as cofactor.

The enzyme catalyses D-glyceraldehyde 3-phosphate + pyruvate + H(+) = 1-deoxy-D-xylulose 5-phosphate + CO2. It participates in metabolic intermediate biosynthesis; 1-deoxy-D-xylulose 5-phosphate biosynthesis; 1-deoxy-D-xylulose 5-phosphate from D-glyceraldehyde 3-phosphate and pyruvate: step 1/1. Functionally, catalyzes the acyloin condensation reaction between C atoms 2 and 3 of pyruvate and glyceraldehyde 3-phosphate to yield 1-deoxy-D-xylulose-5-phosphate (DXP). This Synechocystis sp. (strain ATCC 27184 / PCC 6803 / Kazusa) protein is 1-deoxy-D-xylulose-5-phosphate synthase.